Reading from the N-terminus, the 233-residue chain is Large ribosomal subunit protein uL1 (233 aa).

It belongs to the universal ribosomal protein uL1 family. As to quaternary structure, part of the 50S ribosomal subunit.

Binds directly to 23S rRNA. Forms the L1 stalk. Unlike the case in the Thermus thermophilus 70S ribosome, this protein is not seen to block the exit path of the E site tRNA. It is clear that the protein in the structure is flexible however, so this is probably due to its position in these crystals. Its function is as follows. Protein L1 is also a translational repressor protein, it controls the translation of the L11 operon by binding to its mRNA. This is Large ribosomal subunit protein uL1 (rplA) from Deinococcus radiodurans (strain ATCC 13939 / DSM 20539 / JCM 16871 / CCUG 27074 / LMG 4051 / NBRC 15346 / NCIMB 9279 / VKM B-1422 / R1).